We begin with the raw amino-acid sequence, 103 residues long: Large ribosomal subunit protein eL30 (103 aa).

This sequence belongs to the eukaryotic ribosomal protein eL30 family.

This is Large ribosomal subunit protein eL30 from Methanosarcina mazei (strain ATCC BAA-159 / DSM 3647 / Goe1 / Go1 / JCM 11833 / OCM 88) (Methanosarcina frisia).